Consider the following 398-residue polypeptide: O-methyltransferase hmp5 (398 aa).

Residues 233-234 (GG), E261, and 283-284 (DF) each bind S-adenosyl-L-methionine. H303 acts as the Proton acceptor in catalysis.

The protein belongs to the class I-like SAM-binding methyltransferase superfamily. Cation-independent O-methyltransferase family.

The protein operates within secondary metabolite biosynthesis. Its function is as follows. O-methyltransferase; part of the gene cluster that mediates the biosynthesis of hypothemycin, a resorcylic acid lactone (RAL) that irreversibly inhibits a subset of protein kinases with a conserved cysteine in the ATP binding site such as human ERK2. The first step is performed by both PKSs hmp3 and hmp8 and leads to the production of 7',8'-dehydrozearalenol (DHZ). The highly reducing PKS hpm8 synthesizes the reduced hexaketide (7S,11S,2E,8E)-7,11-dihydroxy-dodeca-2,8-dienoate, which is transferred downstream to the non-reducing PKS hpm3. Hpm3 then extends the reduced hexaketide to a nonaketide, after which regioselective cyclization and macrolactonization affords DHZ. The next step is the conversion of DHZ into aigialomycin C and is performed by the O-methyltransferase hmp5, the FAD-binding monooxygenase hmp7, and the cytochrome P450 monooxygenase hmp1. The wide substrate tolerance of the hmp5 and hmp7 implies that the reactions from DHZ to aigialomycin C can occur in any order. The steps from aigialomycin C to hypothemycin are less well established. The FAD-linked oxidoreductase hmp9 presumably catalyzes oxidation of the C-6' hydroxyl to a ketone. The timing of this oxidation is important, since the resulting enone functional group is a Michael acceptor that can react spontaneously with glutathione, an abundant metabolite in fungal cells. The glutathione S-transferase hmp2 catalyzes cis-trans isomerization of the 7',8' double bond with equilibrium favoring the trans isomer. The hpm6-encoded transporter might preferentially pump hypothemycin out of the cell relative to the trans isomer aigialomycin A. The cis-to-trans isomerization may be coupled with C-4' hydroxylation, since all known hypothemycin analogs containing the enone functional group also have hydroxyl groups at both C-4' and C-5'. The sequence is that of O-methyltransferase hmp5 from Hypomyces subiculosus (Nectria subiculosa).